Reading from the N-terminus, the 330-residue chain is Cyclin-dependent kinase 7 (330 aa).

The Protein kinase domain maps to 5 to 289; it reads YDTIKHLGEG…CTQSLQMEYF (285 aa). ATP-binding positions include 11 to 19 and K34; that span reads LGEGQFANV. D130 serves as the catalytic Proton acceptor. The residue at position 163 (T163) is a Phosphothreonine. Positions 305–330 are disordered; it reads KKQQPQKRSRRLDDDGTRPVRRLNFD. Positions 315–330 are enriched in basic and acidic residues; that stretch reads RLDDDGTRPVRRLNFD.

Belongs to the protein kinase superfamily. CMGC Ser/Thr protein kinase family. CDC2/CDKX subfamily. As to quaternary structure, catalytic component which, in association with cyclin H (cyh-1) and mat1, is likely to form the CAK complex.

The enzyme catalyses L-seryl-[protein] + ATP = O-phospho-L-seryl-[protein] + ADP + H(+). The catalysed reaction is L-threonyl-[protein] + ATP = O-phospho-L-threonyl-[protein] + ADP + H(+). It catalyses the reaction [DNA-directed RNA polymerase] + ATP = phospho-[DNA-directed RNA polymerase] + ADP + H(+). Its function is as follows. Serine/threonine kinase involved in cell cycle control and in RNA polymerase II-mediated RNA transcription. Required for maintaining chromosome ploidy. May phosphorylate the large subunit of RNA polymerase II, ama-1. The protein is Cyclin-dependent kinase 7 of Caenorhabditis elegans.